We begin with the raw amino-acid sequence, 105 residues long: Large ribosomal subunit protein uL23 (105 aa).

The protein belongs to the universal ribosomal protein uL23 family. As to quaternary structure, part of the 50S ribosomal subunit. Contacts protein L29, and trigger factor when it is bound to the ribosome.

Functionally, one of the early assembly proteins it binds 23S rRNA. One of the proteins that surrounds the polypeptide exit tunnel on the outside of the ribosome. Forms the main docking site for trigger factor binding to the ribosome. In Ureaplasma parvum serovar 3 (strain ATCC 27815 / 27 / NCTC 11736), this protein is Large ribosomal subunit protein uL23.